The chain runs to 332 residues: uncharacterized protein (332 aa).

A disordered region spans residues 306–332; that stretch reads EKNTSEVTEPKTGPSGTKDNYHLHSIF.

This is an uncharacterized protein from Homo sapiens (Human).